The chain runs to 322 residues: Aspartate carbamoyltransferase catalytic subunit (322 aa).

Residues R70 and T71 each contribute to the carbamoyl phosphate site. Residue K98 coordinates L-aspartate. Residues R120, H150, and Q153 each contribute to the carbamoyl phosphate site. L-aspartate-binding residues include R184 and R239. Carbamoyl phosphate-binding residues include G280 and P281.

The protein belongs to the aspartate/ornithine carbamoyltransferase superfamily. ATCase family. In terms of assembly, heterododecamer (2C3:3R2) of six catalytic PyrB chains organized as two trimers (C3), and six regulatory PyrI chains organized as three dimers (R2).

The catalysed reaction is carbamoyl phosphate + L-aspartate = N-carbamoyl-L-aspartate + phosphate + H(+). It functions in the pathway pyrimidine metabolism; UMP biosynthesis via de novo pathway; (S)-dihydroorotate from bicarbonate: step 2/3. Catalyzes the condensation of carbamoyl phosphate and aspartate to form carbamoyl aspartate and inorganic phosphate, the committed step in the de novo pyrimidine nucleotide biosynthesis pathway. The polypeptide is Aspartate carbamoyltransferase catalytic subunit (Xylella fastidiosa (strain 9a5c)).